The primary structure comprises 142 residues: Pro-Viral epidermal growth factor (142 aa).

The N-terminal stretch at 1–19 (MSIKYLMLLFAAMIIRSLA) is a signal peptide. Topologically, residues 20-104 (DSGNAIETTS…DTTTSYIPSL (85 aa)) are extracellular. The N-linked (GlcNAc...) asparagine; by host glycan is linked to asparagine 34. Cysteines 71 and 80 form a disulfide. Residues 105–125 (GIVLVLVGIIITCCLLSVYMF) traverse the membrane as a helical segment. At 126–142 (TRRTKLPIQDMVVLYFL) the chain is on the cytoplasmic side.

The protein belongs to the orthopoxvirus OPG019 family. Interacts with host EGFR. In terms of processing, cleaved at the cell surface by host ADAM10, thereby releasing the secreted form of VGF.

The protein resides in the host membrane. The protein localises to the secreted. Functionally, stimulates cellular proliferation (hyperplasia)and mobility around infected cells to promote rapid and efficient spread of infection. This effect is beneficial for virus replication in vivo, because poxviruses replicate possibly better in proliferating cells than in quiescent cells. Acts by binding host EGFR, inducing its dimerization, autophosphorylation and leading to activation of several cellular pathways regulating cell proliferation or cell survival. The activation by host EGFR of mitogen activated protein kinases (MAPK) and extracellular-signal regulated kinases (ERK) are essential for the positive effect of vaccinia growth factor on poxvirus virulence in vivo. This is Pro-Viral epidermal growth factor (OPG019) from Cynomys gunnisoni (Gunnison's prairie dog).